The chain runs to 369 residues: Flagellar P-ring protein (369 aa).

The signal sequence occupies residues 1-23 (MIKQFAVSLLLVLLTLVTTTASA).

Belongs to the FlgI family. In terms of assembly, the basal body constitutes a major portion of the flagellar organelle and consists of four rings (L,P,S, and M) mounted on a central rod.

The protein resides in the periplasm. Its subcellular location is the bacterial flagellum basal body. Its function is as follows. Assembles around the rod to form the L-ring and probably protects the motor/basal body from shearing forces during rotation. The polypeptide is Flagellar P-ring protein (Photorhabdus laumondii subsp. laumondii (strain DSM 15139 / CIP 105565 / TT01) (Photorhabdus luminescens subsp. laumondii)).